We begin with the raw amino-acid sequence, 443 residues long: Ribosomal protein uS12 methylthiotransferase RimO (443 aa).

One can recognise an MTTase N-terminal domain in the interval 9–119 (PKIGMVSLGC…VVSAVHDAAP (111 aa)). Residues Cys-18, Cys-54, Cys-83, Cys-150, Cys-154, and Cys-157 each coordinate [4Fe-4S] cluster. The Radical SAM core domain occupies 136–373 (LTPRHYSYLK…MEKAAQISEA (238 aa)). Positions 376 to 443 (QAKIGRDIAT…EHDLFGVALS (68 aa)) constitute a TRAM domain.

The protein belongs to the methylthiotransferase family. RimO subfamily. The cofactor is [4Fe-4S] cluster.

It localises to the cytoplasm. It carries out the reaction L-aspartate(89)-[ribosomal protein uS12]-hydrogen + (sulfur carrier)-SH + AH2 + 2 S-adenosyl-L-methionine = 3-methylsulfanyl-L-aspartate(89)-[ribosomal protein uS12]-hydrogen + (sulfur carrier)-H + 5'-deoxyadenosine + L-methionine + A + S-adenosyl-L-homocysteine + 2 H(+). In terms of biological role, catalyzes the methylthiolation of an aspartic acid residue of ribosomal protein uS12. This chain is Ribosomal protein uS12 methylthiotransferase RimO, found in Zymomonas mobilis subsp. mobilis (strain ATCC 31821 / ZM4 / CP4).